Reading from the N-terminus, the 401-residue chain is Formate-dependent phosphoribosylglycinamide formyltransferase (401 aa).

N(1)-(5-phospho-beta-D-ribosyl)glycinamide contacts are provided by residues 22-23 and glutamate 82; that span reads EL. ATP-binding positions include arginine 115, lysine 157, 162-167, 197-200, and glutamate 205; these read SSGKGQ and EGFI. An ATP-grasp domain is found at 120–315; that stretch reads RLAAESLGLP…EFELHARAIL (196 aa). Mg(2+) is bound by residues glutamate 274 and glutamate 286. N(1)-(5-phospho-beta-D-ribosyl)glycinamide is bound by residues aspartate 293, lysine 362, and 369–370; that span reads RR.

Belongs to the PurK/PurT family. In terms of assembly, homodimer.

It carries out the reaction N(1)-(5-phospho-beta-D-ribosyl)glycinamide + formate + ATP = N(2)-formyl-N(1)-(5-phospho-beta-D-ribosyl)glycinamide + ADP + phosphate + H(+). Its pathway is purine metabolism; IMP biosynthesis via de novo pathway; N(2)-formyl-N(1)-(5-phospho-D-ribosyl)glycinamide from N(1)-(5-phospho-D-ribosyl)glycinamide (formate route): step 1/1. Its function is as follows. Involved in the de novo purine biosynthesis. Catalyzes the transfer of formate to 5-phospho-ribosyl-glycinamide (GAR), producing 5-phospho-ribosyl-N-formylglycinamide (FGAR). Formate is provided by PurU via hydrolysis of 10-formyl-tetrahydrofolate. The protein is Formate-dependent phosphoribosylglycinamide formyltransferase of Cupriavidus necator (strain ATCC 17699 / DSM 428 / KCTC 22496 / NCIMB 10442 / H16 / Stanier 337) (Ralstonia eutropha).